A 1004-amino-acid polypeptide reads, in one-letter code: 2-oxoglutarate dehydrogenase E1 component (1004 aa).

This sequence belongs to the alpha-ketoglutarate dehydrogenase family. In terms of assembly, homodimer. Part of the 2-oxoglutarate dehydrogenase (OGDH) complex composed of E1 (2-oxoglutarate dehydrogenase), E2 (dihydrolipoamide succinyltransferase) and E3 (dihydrolipoamide dehydrogenase); the complex contains multiple copies of the three enzymatic components (E1, E2 and E3). It depends on thiamine diphosphate as a cofactor.

It carries out the reaction N(6)-[(R)-lipoyl]-L-lysyl-[protein] + 2-oxoglutarate + H(+) = N(6)-[(R)-S(8)-succinyldihydrolipoyl]-L-lysyl-[protein] + CO2. Its function is as follows. E1 component of the 2-oxoglutarate dehydrogenase (OGDH) complex which catalyzes the decarboxylation of 2-oxoglutarate, the first step in the conversion of 2-oxoglutarate to succinyl-CoA and CO(2). The polypeptide is 2-oxoglutarate dehydrogenase E1 component (Brucella suis (strain ATCC 23445 / NCTC 10510)).